The chain runs to 277 residues: NADPH-dependent 7-cyano-7-deazaguanine reductase (277 aa).

83 to 85 (IES) serves as a coordination point for substrate. An NADPH-binding site is contributed by 85-86 (SK). C184 serves as the catalytic Thioimide intermediate. D191 acts as the Proton donor in catalysis. Substrate is bound at residue 223–224 (HE). Residue 252 to 253 (RG) participates in NADPH binding.

The protein belongs to the GTP cyclohydrolase I family. QueF type 2 subfamily. In terms of assembly, homodimer.

Its subcellular location is the cytoplasm. The enzyme catalyses 7-aminomethyl-7-carbaguanine + 2 NADP(+) = 7-cyano-7-deazaguanine + 2 NADPH + 3 H(+). Its pathway is tRNA modification; tRNA-queuosine biosynthesis. Catalyzes the NADPH-dependent reduction of 7-cyano-7-deazaguanine (preQ0) to 7-aminomethyl-7-deazaguanine (preQ1). This chain is NADPH-dependent 7-cyano-7-deazaguanine reductase, found in Cupriavidus necator (strain ATCC 17699 / DSM 428 / KCTC 22496 / NCIMB 10442 / H16 / Stanier 337) (Ralstonia eutropha).